Reading from the N-terminus, the 384-residue chain is 8-amino-7-oxononanoate synthase (384 aa).

R21 serves as a coordination point for substrate. 108 to 109 is a pyridoxal 5'-phosphate binding site; sequence GF. H133 contacts substrate. Positions 179, 207, and 233 each coordinate pyridoxal 5'-phosphate. K236 carries the post-translational modification N6-(pyridoxal phosphate)lysine. T352 lines the substrate pocket.

This sequence belongs to the class-II pyridoxal-phosphate-dependent aminotransferase family. BioF subfamily. In terms of assembly, homodimer. Requires pyridoxal 5'-phosphate as cofactor.

It carries out the reaction 6-carboxyhexanoyl-[ACP] + L-alanine + H(+) = (8S)-8-amino-7-oxononanoate + holo-[ACP] + CO2. It functions in the pathway cofactor biosynthesis; biotin biosynthesis. In terms of biological role, catalyzes the decarboxylative condensation of pimeloyl-[acyl-carrier protein] and L-alanine to produce 8-amino-7-oxononanoate (AON), [acyl-carrier protein], and carbon dioxide. This is 8-amino-7-oxononanoate synthase from Citrobacter koseri (strain ATCC BAA-895 / CDC 4225-83 / SGSC4696).